The primary structure comprises 20 residues: Peroxidase 1 (20 aa).

Heme is bound at residue His14. Ca(2+) is bound at residue Thr15.

It belongs to the peroxidase family. Classical plant (class III) peroxidase subfamily. The cofactor is Ca(2+). It depends on heme b as a cofactor.

It is found in the secreted. The enzyme catalyses 2 a phenolic donor + H2O2 = 2 a phenolic radical donor + 2 H2O. Its function is as follows. Removal of H(2)O(2), oxidation of toxic reductants, biosynthesis and degradation of lignin, suberization, auxin catabolism, response to environmental stresses such as wounding, pathogen attack and oxidative stress. These functions might be dependent on each isozyme/isoform in each plant tissue. The chain is Peroxidase 1 from Betula pendula (European white birch).